Reading from the N-terminus, the 468-residue chain is Gasdermin-C (468 aa).

A triggers pyroptosis region spans residues 1-230 (MSYTFDWLSK…CVILTSANTK (230 aa)).

It belongs to the gasdermin family. In terms of assembly, homooligomer; homooligomeric ring-shaped pore complex containing 27-28 subunits when inserted in the membrane. Post-translationally, cleavage by CASP8 relieves autoinhibition by releasing the N-terminal moiety (Gasdermin-C, N-terminal) that initiates pyroptosis. Palmitoylated.

The protein resides in the cytoplasm. It is found in the cytosol. Its subcellular location is the cell membrane. The full-length protein before cleavage is inactive: intramolecular interactions between N- and C-terminal domains mediate autoinhibition in the absence of activation signal. The intrinsic pyroptosis-inducing activity is carried by the released N-terminal moiety (Gasdermin-C, N-terminal) following cleavage by caspase CASP8. In terms of biological role, this form constitutes the precursor of the pore-forming protein: upon cleavage, the released N-terminal moiety (Gasdermin-C, N-terminal) binds to membranes and forms pores, triggering pyroptosis. Functionally, pore-forming protein that causes membrane permeabilization and pyroptosis. Produced by the cleavage of gasdermin-C by caspase CASP8 in response to death signals. After cleavage, moves to the plasma membrane where it strongly binds to membrane inner leaflet lipids. Homooligomerizes within the membrane and forms pores of 10-15 nanometers (nm) of inner diameter, triggering pyroptosis. The sequence is that of Gasdermin-C from Mus musculus (Mouse).